The following is a 314-amino-acid chain: O-antigen chain rhamnosyltransferase RfbN (314 aa).

Belongs to the glycosyltransferase 2 family.

It catalyses the reaction alpha-D-galactosyl-di-trans,octa-cis-undecaprenyl diphosphate + dTDP-beta-L-rhamnose = alpha-L-rhamnosyl-(1-&gt;3)-alpha-D-galactosyl-1-diphospho-di-trans,octa-cis-undecaprenol + dTDP + H(+). The protein operates within bacterial outer membrane biogenesis; LPS O-antigen biosynthesis. Rhamnosyltransferase involved in the biosynthesis of the repeat unit of the lipopolysaccharide (LPS) O-antigen region. Catalyzes the addition of a rhamnose to the galactosyl-undecaprenyl diphosphate intermediate. In Salmonella typhimurium (strain LT2 / SGSC1412 / ATCC 700720), this protein is O-antigen chain rhamnosyltransferase RfbN.